The following is a 173-amino-acid chain: Lipoprotein signal peptidase (173 aa).

A run of 3 helical transmembrane segments spans residues 11 to 31 (FGLI…WIVT), 69 to 89 (TTRW…AFWM), and 93 to 113 (QAKG…GNIV). Active-site residues include Asp123 and Asp142. A helical transmembrane segment spans residues 134 to 154 (PFMIFNVADACITIGVLLLVA).

It belongs to the peptidase A8 family.

The protein resides in the cell inner membrane. It catalyses the reaction Release of signal peptides from bacterial membrane prolipoproteins. Hydrolyzes -Xaa-Yaa-Zaa-|-(S,diacylglyceryl)Cys-, in which Xaa is hydrophobic (preferably Leu), and Yaa (Ala or Ser) and Zaa (Gly or Ala) have small, neutral side chains.. It participates in protein modification; lipoprotein biosynthesis (signal peptide cleavage). This protein specifically catalyzes the removal of signal peptides from prolipoproteins. This Sphingopyxis alaskensis (strain DSM 13593 / LMG 18877 / RB2256) (Sphingomonas alaskensis) protein is Lipoprotein signal peptidase.